Consider the following 663-residue polypeptide: UvrABC system protein B (663 aa).

Residues 31 to 418 form the Helicase ATP-binding domain; that stretch reads DNIEGGEKAQ…TDTVVEQIIR (388 aa). 44–51 serves as a coordination point for ATP; sequence GATGTGKT. Positions 97–120 match the Beta-hairpin motif; it reads YYDYYQPEAYVPSSDTYIEKDSSV. Residues 435 to 601 enclose the Helicase C-terminal domain; sequence QMDDLLGEIN…TIKKEIRDLI (167 aa). One can recognise a UVR domain in the interval 627 to 662; it reads QAEIKALQQQMQEAAELLDFELAAQIRDVILELKAI.

The protein belongs to the UvrB family. As to quaternary structure, forms a heterotetramer with UvrA during the search for lesions. Interacts with UvrC in an incision complex.

It is found in the cytoplasm. In terms of biological role, the UvrABC repair system catalyzes the recognition and processing of DNA lesions. A damage recognition complex composed of 2 UvrA and 2 UvrB subunits scans DNA for abnormalities. Upon binding of the UvrA(2)B(2) complex to a putative damaged site, the DNA wraps around one UvrB monomer. DNA wrap is dependent on ATP binding by UvrB and probably causes local melting of the DNA helix, facilitating insertion of UvrB beta-hairpin between the DNA strands. Then UvrB probes one DNA strand for the presence of a lesion. If a lesion is found the UvrA subunits dissociate and the UvrB-DNA preincision complex is formed. This complex is subsequently bound by UvrC and the second UvrB is released. If no lesion is found, the DNA wraps around the other UvrB subunit that will check the other stand for damage. In Streptococcus agalactiae serotype III (strain NEM316), this protein is UvrABC system protein B.